The following is a 341-amino-acid chain: Biotin synthase (341 aa).

In terms of domain architecture, Radical SAM core spans 40 to 267 (AEIQVSTLLS…RSMVRLSAGR (228 aa)). The [4Fe-4S] cluster site is built by C55, C59, and C62. Residues C99, C130, C190, and R262 each contribute to the [2Fe-2S] cluster site.

This sequence belongs to the radical SAM superfamily. Biotin synthase family. In terms of assembly, homodimer. [4Fe-4S] cluster serves as cofactor. Requires [2Fe-2S] cluster as cofactor.

It catalyses the reaction (4R,5S)-dethiobiotin + (sulfur carrier)-SH + 2 reduced [2Fe-2S]-[ferredoxin] + 2 S-adenosyl-L-methionine = (sulfur carrier)-H + biotin + 2 5'-deoxyadenosine + 2 L-methionine + 2 oxidized [2Fe-2S]-[ferredoxin]. It functions in the pathway cofactor biosynthesis; biotin biosynthesis; biotin from 7,8-diaminononanoate: step 2/2. Functionally, catalyzes the conversion of dethiobiotin (DTB) to biotin by the insertion of a sulfur atom into dethiobiotin via a radical-based mechanism. The chain is Biotin synthase from Xylella fastidiosa (strain M23).